A 295-amino-acid polypeptide reads, in one-letter code: MDTDIGSRTWHAHAKINLALHVTGRRADGYHLIDSLAVFTRFGDRVEIALADSDDFTVSGRYAPAVPLDAGNLVLKARDALRREAGSGRTPPVSIKLEKNLPIASGVGGGSSDAAAVLRGLAQTWALDIDDAGLARIGLSLGADVPMCLAAKPLVARGIGDELSMVPDFSALGLVLVNPGTPVSTADVFAALSRRDNEPLPPLPRSIDFHSLRNWLEVTRNDLEPAALALQPAIGRALSWLNKAGSGFSRMSGSGATCFGLFETGNVAKRAAAEIRSRQPDWFVAATRSMSSEAE.

Lys-15 is a catalytic residue. 102–112 (PIASGVGGGSS) provides a ligand contact to ATP. Residue Asp-144 is part of the active site.

This sequence belongs to the GHMP kinase family. IspE subfamily.

It catalyses the reaction 4-CDP-2-C-methyl-D-erythritol + ATP = 4-CDP-2-C-methyl-D-erythritol 2-phosphate + ADP + H(+). Its pathway is isoprenoid biosynthesis; isopentenyl diphosphate biosynthesis via DXP pathway; isopentenyl diphosphate from 1-deoxy-D-xylulose 5-phosphate: step 3/6. Catalyzes the phosphorylation of the position 2 hydroxy group of 4-diphosphocytidyl-2C-methyl-D-erythritol. In Mesorhizobium japonicum (strain LMG 29417 / CECT 9101 / MAFF 303099) (Mesorhizobium loti (strain MAFF 303099)), this protein is 4-diphosphocytidyl-2-C-methyl-D-erythritol kinase.